A 440-amino-acid polypeptide reads, in one-letter code: Chromosome partition protein MukF (440 aa).

Positions Leu208–Ile236 are leucine-zipper.

Belongs to the MukF family. As to quaternary structure, interacts, and probably forms a ternary complex, with MukE and MukB via its C-terminal region. The complex formation is stimulated by calcium or magnesium. It is required for an interaction between MukE and MukB.

The protein resides in the cytoplasm. It is found in the nucleoid. Involved in chromosome condensation, segregation and cell cycle progression. May participate in facilitating chromosome segregation by condensation DNA from both sides of a centrally located replisome during cell division. Not required for mini-F plasmid partitioning. Probably acts via its interaction with MukB and MukE. Overexpression results in anucleate cells. It has a calcium binding activity. The protein is Chromosome partition protein MukF of Serratia proteamaculans (strain 568).